A 576-amino-acid chain; its full sequence is MAPGCCTTRPRPIALLAHIWRHCKPLCLLLVLLLLCETVQANPDAKRLYDDLLSNYNRLIRPVSNNTDTVLVKLGLRLSQLIDLNLKDQILTTNVWLEHEWQDHKFKWDPSEYGGVTELYVPSEHIWLPDIVLYNNADGEYVVTTMTKAILHYTGKVVWTPPAIFKSSCEIDVRYFPFDQQTCFMKFGSWTYDGDQIDLKHISQKNDKDNKVEIGIDLREYYPSVEWDILGVPAERHEKYYPCCAEPYPDIFFNITLRRKTLFYTVNLIIPCVGISYLSVLVFYLPADSGEKIALCISILLSQTMFFLLISEIIPSTSLALPLLGKYLLFTMLLVGLSVVITIIILNIHYRKPSTHKMRPWIRSFFIKRLPKLLLMRVPKDLLRDLAANKINYGLKFSKTKFGQALMDEMQMNSGGSSPDSLRRMQGRVGAGGCNGMHVTTATNRFSGLVGALGGGLSTLSGYNGLPSVLSGLDDSLSDVAARKKYPFELEKAIHNVMFIQHHMQRQDEFNAEDQDWGFVAMVMDRLFLWLFMIASLVGTFVILGEAPSLYDDTKAIDVQLSDVAKQIYNLTEKKN.

The signal sequence occupies residues 1-21 (MAPGCCTTRPRPIALLAHIWR). The Extracellular portion of the chain corresponds to 22–261 (HCKPLCLLLV…FFNITLRRKT (240 aa)). Residue asparagine 65 is glycosylated (N-linked (GlcNAc...) asparagine). 2 disulfide bridges follow: cysteine 169–cysteine 183 and cysteine 243–cysteine 244. A glycan (N-linked (GlcNAc...) asparagine) is linked at asparagine 254. 3 helical membrane-spanning segments follow: residues 262–285 (LFYT…VFYL), 293–311 (IALC…LLIS), and 327–346 (YLLF…IIIL). The Cytoplasmic segment spans residues 347 to 526 (NIHYRKPSTH…WGFVAMVMDR (180 aa)). Residues 527-545 (LFLWLFMIASLVGTFVILG) traverse the membrane as a helical segment. N-linked (GlcNAc...) asparagine glycosylation is present at asparagine 570.

It belongs to the ligand-gated ion channel (TC 1.A.9) family. Acetylcholine receptor (TC 1.A.9.1) subfamily. As to expression, CNS in embryos.

It localises to the postsynaptic cell membrane. The protein resides in the cell membrane. Functionally, after binding acetylcholine, the AChR responds by an extensive change in conformation that affects all subunits and leads to opening of an ion-conducting channel across the plasma membrane. This Drosophila melanogaster (Fruit fly) protein is Acetylcholine receptor subunit alpha-like 2 (nAChRalpha2).